The sequence spans 518 residues: Glutamate--cysteine ligase (518 aa).

This sequence belongs to the glutamate--cysteine ligase type 1 family. Type 1 subfamily.

It catalyses the reaction L-cysteine + L-glutamate + ATP = gamma-L-glutamyl-L-cysteine + ADP + phosphate + H(+). It functions in the pathway sulfur metabolism; glutathione biosynthesis; glutathione from L-cysteine and L-glutamate: step 1/2. The chain is Glutamate--cysteine ligase (gshA) from Buchnera aphidicola subsp. Acyrthosiphon pisum (strain APS) (Acyrthosiphon pisum symbiotic bacterium).